Here is a 392-residue protein sequence, read N- to C-terminus: Nucleosome assembly protein 1-like 1-A (392 aa).

The interval 1–37 (MANIDNKGQTELDQQDMEDVEDVEEEETGEDANSKAR) is disordered. A compositionally biased stretch (acidic residues) spans 13–30 (DQQDMEDVEDVEEEETGE). Residues 126–150 (YEPTEEECEWKVEEEDISGDLKEKA) carry the NAP1L motif motif. The short motif at 273–279 (IKKKQKH) is the Nuclear localization signal element. Residues 346–377 (AIEDDDDDYDEEGEEADDEEGEEEADEDNDPD) show a composition bias toward acidic residues. The tract at residues 346–392 (AIEDDDDDYDEEGEEADDEEGEEEADEDNDPDYEPKKGQNPAECKQQ) is disordered.

This sequence belongs to the nucleosome assembly protein (NAP) family. In terms of assembly, forms homomultimers. Interacts with histone B4. Interacts with the B-type cyclins ccnb1 and ccnb2. In terms of processing, phosphorylated by cyclin B-cdc2 kinase complexes. As to expression, initially expressed throughout the embryo with expression higher at the animal pole. Becomes localized to presumptive ectoderm by gastrula stages. By stage 18 (neurula), expressed in the neural plate and posterior to the cement gland. In late neurula/early tailbud stages, expressed in the neural crest, neural tube, eyes, tailbud and ventral blood islands. Adult expression is predominantly in ovaries.

It is found in the cytoplasm. The protein localises to the nucleus. Its function is as follows. Acts as a chaperone for the linker histone to facilitate deposition of histone B4 onto linker DNA. Required for both remodeling of sperm chromatin into nucleosomes, and linker histone binding to nucleosome core dimers. Plays a role in tissue-specific gene regulation. Required for primitive hemopoiesis, acting upstream of tal1/scl. The protein is Nucleosome assembly protein 1-like 1-A (nap1l1-a) of Xenopus laevis (African clawed frog).